The following is a 222-amino-acid chain: Small ribosomal subunit protein eS1 (222 aa).

This sequence belongs to the eukaryotic ribosomal protein eS1 family.

This chain is Small ribosomal subunit protein eS1, found in Pyrobaculum islandicum (strain DSM 4184 / JCM 9189 / GEO3).